A 135-amino-acid chain; its full sequence is uncharacterized protein (135 aa).

This is an uncharacterized protein from Magallana gigas (Pacific oyster).